The chain runs to 390 residues: Succinate--CoA ligase [ADP-forming] subunit beta (390 aa).

An ATP-grasp domain is found at 9–248 (KEILRRHKAN…ITEEDPLEVQ (240 aa)). ATP-binding positions include Lys50, 57–59 (GRG), Glu103, Ile106, and Glu111. Mg(2+)-binding residues include Asn203 and Asp217. Residues Asn268 and 325–327 (GIV) contribute to the substrate site.

Belongs to the succinate/malate CoA ligase beta subunit family. Heterotetramer of two alpha and two beta subunits. It depends on Mg(2+) as a cofactor.

The catalysed reaction is succinate + ATP + CoA = succinyl-CoA + ADP + phosphate. It catalyses the reaction GTP + succinate + CoA = succinyl-CoA + GDP + phosphate. Its pathway is carbohydrate metabolism; tricarboxylic acid cycle; succinate from succinyl-CoA (ligase route): step 1/1. Functionally, succinyl-CoA synthetase functions in the citric acid cycle (TCA), coupling the hydrolysis of succinyl-CoA to the synthesis of either ATP or GTP and thus represents the only step of substrate-level phosphorylation in the TCA. The beta subunit provides nucleotide specificity of the enzyme and binds the substrate succinate, while the binding sites for coenzyme A and phosphate are found in the alpha subunit. In Leptospira borgpetersenii serovar Hardjo-bovis (strain JB197), this protein is Succinate--CoA ligase [ADP-forming] subunit beta.